A 376-amino-acid chain; its full sequence is Lipoprotein p33 (376 aa).

The signal sequence occupies residues 1–30; that stretch reads MKIKKIKLLKALALTGAFGIVATVPVIVYS. A lipid anchor (N-palmitoyl cysteine) is attached at cysteine 31. Cysteine 31 carries S-diacylglycerol cysteine lipidation. The segment at 35-59 is disordered; it reads DNNGGTGDNNTGGGGSGTDQQQGTT. The span at 38–51 shows a compositional bias: gly residues; that stretch reads GGTGDNNTGGGGSG.

This sequence belongs to the p35 lipoprotein family.

The protein resides in the cell membrane. In Malacoplasma penetrans (Mycoplasma penetrans), this protein is Lipoprotein p33.